We begin with the raw amino-acid sequence, 375 residues long: Probable pectin lyase B (375 aa).

The N-terminal stretch at 1-19 (MKYAAFLPTIGALVSQAIA) is a signal peptide. Intrachain disulfides connect Cys-82/Cys-101 and Cys-91/Cys-225. Residue Asn-128 is glycosylated (N-linked (GlcNAc...) asparagine). Arg-255 is an active-site residue. Cys-321 and Cys-329 are joined by a disulfide.

Belongs to the polysaccharide lyase 1 family.

It localises to the secreted. It carries out the reaction Eliminative cleavage of (1-&gt;4)-alpha-D-galacturonan methyl ester to give oligosaccharides with 4-deoxy-6-O-methyl-alpha-D-galact-4-enuronosyl groups at their non-reducing ends.. Its function is as follows. Pectinolytic enzymes consist of four classes of enzymes: pectin lyase, polygalacturonase, pectin methylesterase and rhamnogalacturonase. Among pectinolytic enzymes, pectin lyase is the most important in depolymerization of pectin, since it cleaves internal glycosidic bonds of highly methylated pectins. The sequence is that of Probable pectin lyase B (pelB) from Aspergillus fumigatus (strain CBS 144.89 / FGSC A1163 / CEA10) (Neosartorya fumigata).